We begin with the raw amino-acid sequence, 198 residues long: dTTP/UTP pyrophosphatase (198 aa).

D78 acts as the Proton acceptor in catalysis.

The protein belongs to the Maf family. YhdE subfamily. Requires a divalent metal cation as cofactor.

It is found in the cytoplasm. It carries out the reaction dTTP + H2O = dTMP + diphosphate + H(+). The enzyme catalyses UTP + H2O = UMP + diphosphate + H(+). Nucleoside triphosphate pyrophosphatase that hydrolyzes dTTP and UTP. May have a dual role in cell division arrest and in preventing the incorporation of modified nucleotides into cellular nucleic acids. In Chromobacterium violaceum (strain ATCC 12472 / DSM 30191 / JCM 1249 / CCUG 213 / NBRC 12614 / NCIMB 9131 / NCTC 9757 / MK), this protein is dTTP/UTP pyrophosphatase.